The primary structure comprises 199 residues: Putative pseudouridine methyltransferase (199 aa).

Residues Leu-132 and Cys-186 each coordinate S-adenosyl-L-methionine.

Belongs to the methyltransferase superfamily. TrmY family.

The protein resides in the cytoplasm. The protein is Putative pseudouridine methyltransferase of Vibrio parahaemolyticus serotype O3:K6 (strain RIMD 2210633).